The following is a 626-amino-acid chain: Chaperone protein HtpG (626 aa).

Residues 1 to 331 form an a; substrate-binding region; that stretch reads MSETVERHEF…TDDLPLNVSR (331 aa). Residues 332–544 are b; it reads EMLQSTPTLQ…GMGPDLQMQR (213 aa). The segment at 545-626 is c; it reads LLRRAGRGFG…GTAAKPAESA (82 aa).

This sequence belongs to the heat shock protein 90 family. As to quaternary structure, homodimer.

Its subcellular location is the cytoplasm. Its function is as follows. Molecular chaperone. Has ATPase activity. The protein is Chaperone protein HtpG of Methylorubrum extorquens (strain PA1) (Methylobacterium extorquens).